A 567-amino-acid chain; its full sequence is MFS-type transporter poxA (567 aa).

Residues 1-23 (MPASDRTSETGDVEKVTAAETPK) are compositionally biased toward basic and acidic residues. The segment at 1–24 (MPASDRTSETGDVEKVTAAETPKE) is disordered. Helical transmembrane passes span 35–55 (ALTGLPLYTVLVGLGLALFLG), 77–97 (ADIGWYGAAYPLTMSSIQLLA), 108–128 (LVFLVFFGLFMLGSLLCGVAV), 141–161 (GAGAAGVLSGTLAIVSAVVPL), 165–185 (SLILGLMMSLVGTAVVLGPVI), 197–217 (WCFYLNLPCGGVTLLALILFF), 240–260 (LAGCLGFIPAVVMLLLALQWG), 271–291 (SATIIGLFCGAGVSLILFLIW), 311–331 (IIASCLYGFALLGGYVVVGYF), and 349–369 (VMLLPNVITNFISKAVIGVIV). Residue Asn-370 is glycosylated (N-linked (GlcNAc...) asparagine). Transmembrane regions (helical) follow at residues 372 to 392 (TGYFNPWLFFGAAVLAIGSGL), 410 to 430 (ILQGAALGIIQAPTLGVQVAL), 436 to 456 (LIPVALSLVIFFQYFGSSIML), and 515 to 535 (AIAGVMWLSTAAALFGFLVSF). The disordered stretch occupies residues 547–567 (EENKKEAAEEEEEVKVAAVEA).

The protein belongs to the major facilitator superfamily. TCR/Tet family.

It localises to the cell membrane. In terms of biological role, MFS-type transporter; part of the gene cluster that mediates the biosynthesis of oxaleimides, cytotoxic compounds containing an unusual disubstituted succinimide moiety. The protein is MFS-type transporter poxA of Penicillium oxalicum (strain 114-2 / CGMCC 5302) (Penicillium decumbens).